The chain runs to 467 residues: 3-isopropylmalate dehydratase large subunit (467 aa).

[4Fe-4S] cluster-binding residues include cysteine 347, cysteine 407, and cysteine 410.

Belongs to the aconitase/IPM isomerase family. LeuC type 1 subfamily. Heterodimer of LeuC and LeuD. Requires [4Fe-4S] cluster as cofactor.

It catalyses the reaction (2R,3S)-3-isopropylmalate = (2S)-2-isopropylmalate. Its pathway is amino-acid biosynthesis; L-leucine biosynthesis; L-leucine from 3-methyl-2-oxobutanoate: step 2/4. In terms of biological role, catalyzes the isomerization between 2-isopropylmalate and 3-isopropylmalate, via the formation of 2-isopropylmaleate. The sequence is that of 3-isopropylmalate dehydratase large subunit from Crocosphaera subtropica (strain ATCC 51142 / BH68) (Cyanothece sp. (strain ATCC 51142)).